The primary structure comprises 102 residues: Monothiol glutaredoxin-S4 (102 aa).

The 101-residue stretch at 1 to 101 (MDKLQKMISE…PMLKRVGALW (101 aa)) folds into the Glutaredoxin domain. Cys-21 lines the [2Fe-2S] cluster pocket. A Responsive for interaction with TGA factors motif is present at residues 99–102 (ALWL).

This sequence belongs to the glutaredoxin family. CC-type subfamily.

Its subcellular location is the cytoplasm. It is found in the nucleus. Its function is as follows. May only reduce GSH-thiol disulfides, but not protein disulfides. In Arabidopsis thaliana (Mouse-ear cress), this protein is Monothiol glutaredoxin-S4 (GRXS4).